Consider the following 262-residue polypeptide: Carboxy-S-adenosyl-L-methionine synthase (262 aa).

S-adenosyl-L-methionine is bound by residues Y50, 84–86 (GCS), 137–138 (DI), N152, and R219.

The protein belongs to the class I-like SAM-binding methyltransferase superfamily. Cx-SAM synthase family. Homodimer.

It catalyses the reaction prephenate + S-adenosyl-L-methionine = carboxy-S-adenosyl-L-methionine + 3-phenylpyruvate + H2O. Functionally, catalyzes the conversion of S-adenosyl-L-methionine (SAM) to carboxy-S-adenosyl-L-methionine (Cx-SAM). The protein is Carboxy-S-adenosyl-L-methionine synthase of Psychrobacter arcticus (strain DSM 17307 / VKM B-2377 / 273-4).